Here is a 241-residue protein sequence, read N- to C-terminus: Carboxy-S-adenosyl-L-methionine synthase (241 aa).

S-adenosyl-L-methionine is bound by residues Tyr38, 63–65 (GCS), 88–89 (DN), 116–117 (DI), Asn131, and Arg198.

Belongs to the class I-like SAM-binding methyltransferase superfamily. Cx-SAM synthase family. As to quaternary structure, homodimer.

It carries out the reaction prephenate + S-adenosyl-L-methionine = carboxy-S-adenosyl-L-methionine + 3-phenylpyruvate + H2O. In terms of biological role, catalyzes the conversion of S-adenosyl-L-methionine (SAM) to carboxy-S-adenosyl-L-methionine (Cx-SAM). This is Carboxy-S-adenosyl-L-methionine synthase from Haemophilus influenzae (strain ATCC 51907 / DSM 11121 / KW20 / Rd).